Reading from the N-terminus, the 451-residue chain is uncharacterized protein (451 aa).

One can recognise a TRAM domain in the interval Asn2–Lys60. Residues Cys73, Cys79, Cys82, and Cys162 each contribute to the [4Fe-4S] cluster site. Residues Gln283, Tyr312, Asp333, and Asp381 each coordinate S-adenosyl-L-methionine. Cys408 acts as the Nucleophile in catalysis.

It belongs to the class I-like SAM-binding methyltransferase superfamily. RNA M5U methyltransferase family.

This is an uncharacterized protein from Streptococcus pneumoniae serotype 4 (strain ATCC BAA-334 / TIGR4).